The following is a 413-amino-acid chain: Bestrophin homolog 13 (413 aa).

A run of 4 helical transmembrane segments spans residues 29–49 (LIYLILYYSVRVFYLKGIDLI), 72–92 (SYTRLIPLTFLLGFYVSNVVA), 236–256 (LVYTQVAALATYSFFFFTLFG), and 272–292 (LVVPVFTIVQFLFFVGWFKVG).

This sequence belongs to the anion channel-forming bestrophin (TC 1.A.46) family. Calcium-sensitive chloride channel subfamily. Forms oligomers.

The protein localises to the cell membrane. Its function is as follows. Forms chloride channels. In Caenorhabditis elegans, this protein is Bestrophin homolog 13 (best-13).